Reading from the N-terminus, the 164-residue chain is Ribonuclease H (164 aa).

The 142-residue stretch at 9 to 150 folds into the RNase H type-1 domain; the sequence is DMPRVTIYTD…ADTLANAATD (142 aa). Asp-18, Glu-56, Asp-78, and Asp-142 together coordinate Mg(2+).

It belongs to the RNase H family. In terms of assembly, monomer. The cofactor is Mg(2+).

The protein localises to the cytoplasm. It catalyses the reaction Endonucleolytic cleavage to 5'-phosphomonoester.. In terms of biological role, endonuclease that specifically degrades the RNA of RNA-DNA hybrids. This Chromohalobacter salexigens (strain ATCC BAA-138 / DSM 3043 / CIP 106854 / NCIMB 13768 / 1H11) protein is Ribonuclease H.